The primary structure comprises 467 residues: Serine/threonine-protein kinase SSN3 (467 aa).

2 stretches are compositionally biased toward polar residues: residues 1-12 (MSFSNLPPSSGR) and 29-39 (GSSSFTANNPS). A disordered region spans residues 1–45 (MSFSNLPPSSGRGSHADGASGRSMPPFPGSSSFTANNPSKGIHPN). The region spanning 79–408 (YLIVGFISSG…AKEALNHPYF (330 aa)) is the Protein kinase domain. ATP-binding positions include 85-93 (ISSGTYGRV) and K109. D211 (proton acceptor) is an active-site residue. The interval 426–467 (YPNRRVSQDDNDIRSGSLPGTKRSGLPDDTLTSRAAKRAREM) is disordered.

Belongs to the protein kinase superfamily. CMGC Ser/Thr protein kinase family. CDC2/CDKX subfamily. Component of the SRB8-11 complex, a regulatory module of the Mediator complex. It depends on Mg(2+) as a cofactor.

The protein localises to the nucleus. It carries out the reaction L-seryl-[protein] + ATP = O-phospho-L-seryl-[protein] + ADP + H(+). The enzyme catalyses L-threonyl-[protein] + ATP = O-phospho-L-threonyl-[protein] + ADP + H(+). The catalysed reaction is [DNA-directed RNA polymerase] + ATP = phospho-[DNA-directed RNA polymerase] + ADP + H(+). Functionally, component of the SRB8-11 complex. The SRB8-11 complex is a regulatory module of the Mediator complex which is itself involved in regulation of basal and activated RNA polymerase II-dependent transcription. The SRB8-11 complex may be involved in the transcriptional repression of a subset of genes regulated by Mediator. It may inhibit the association of the Mediator complex with RNA polymerase II to form the holoenzyme complex. The SRB8-11 complex phosphorylates the C-terminal domain (CTD) of the largest subunit of RNA polymerase II. The polypeptide is Serine/threonine-protein kinase SSN3 (SSN3) (Coccidioides immitis (strain RS) (Valley fever fungus)).